We begin with the raw amino-acid sequence, 103 residues long: Large ribosomal subunit protein bL21 (103 aa).

The protein belongs to the bacterial ribosomal protein bL21 family. Part of the 50S ribosomal subunit. Contacts protein L20.

In terms of biological role, this protein binds to 23S rRNA in the presence of protein L20. This Wolinella succinogenes (strain ATCC 29543 / DSM 1740 / CCUG 13145 / JCM 31913 / LMG 7466 / NCTC 11488 / FDC 602W) (Vibrio succinogenes) protein is Large ribosomal subunit protein bL21.